The sequence spans 1372 residues: Serine protease pic autotransporter (1372 aa).

The signal sequence occupies residues 1 to 55 (MNKVYSLKYCPVTGGLIAVSELARRVIKKTCRRLTHILLAGIPAICLCYSQISQA). Residues 56 to 301 (GIVRSDIAYQ…NVIPTDYLNQ (246 aa)) form the Peptidase S6 domain. Active-site charge relay system residues include H127, D155, and S258. In terms of domain architecture, Autotransporter spans 1106 to 1372 (DTNGDAGAWA…AVNANFRYMF (267 aa)).

Post-translationally, cleaved to release the mature protein from the outer membrane.

The protein localises to the periplasm. It localises to the secreted. Its subcellular location is the cell surface. It is found in the cell outer membrane. Its function is as follows. Involved in intestinal colonization, displays in vitro mucinolytic activity, serum resistance, and hemagglutination. Important to penetrate the intestinal mucus layer. In Shigella flexneri, this protein is Serine protease pic autotransporter (pic).